The sequence spans 230 residues: Uracil-DNA glycosylase (230 aa).

D65 functions as the Proton acceptor in the catalytic mechanism.

Belongs to the uracil-DNA glycosylase (UDG) superfamily. UNG family.

It localises to the cytoplasm. The enzyme catalyses Hydrolyzes single-stranded DNA or mismatched double-stranded DNA and polynucleotides, releasing free uracil.. In terms of biological role, excises uracil residues from the DNA which can arise as a result of misincorporation of dUMP residues by DNA polymerase or due to deamination of cytosine. In Lactiplantibacillus plantarum (strain ATCC BAA-793 / NCIMB 8826 / WCFS1) (Lactobacillus plantarum), this protein is Uracil-DNA glycosylase.